A 139-amino-acid polypeptide reads, in one-letter code: Histone H2AX (139 aa).

Residues 1–24 (MSSTATTKGGRGKPKASKSVSRSS) are disordered. Position 136 is a phosphoserine; by ATM and ATR (Ser136). A [ST]-Q motif motif is present at residues 136-137 (SQ).

It belongs to the histone H2A family. As to quaternary structure, the nucleosome is a histone octamer containing two molecules each of H2A, H2B, H3 and H4 assembled in one H3-H4 heterotetramer and two H2A-H2B heterodimers. The octamer wraps approximately 147 bp of DNA. Interacts with numerous proteins required for DNA damage signaling and repair when phosphorylated on Ser-136. Phosphorylated on Ser-136 (to form gamma-H2AX) in response to DNA double strand breaks (DSBs) generated by exogenous genotoxic agents and by stalled replication forks, and may also occur during meiotic recombination events. Phosphorylation can extend up to several thousand nucleosomes from the actual site of the DSB and may mark the surrounding chromatin for recruitment of proteins required for DNA damage signaling and repair. Widespread phosphorylation may also serve to amplify the damage signal or aid repair of persistent lesions. Phosphorylation of Ser-136 in response to ionizing radiation is mediated by ATM while defects in DNA replication induce Ser-136 phosphorylation subsequent to activation of ATR. Dephosphorylation of Ser-136 by PP2A is required for DNA DSB repair.

It is found in the nucleus. The protein resides in the chromosome. In terms of biological role, variant histone H2A which replaces conventional H2A in a subset of nucleosomes. Nucleosomes wrap and compact DNA into chromatin, limiting DNA accessibility to the cellular machineries which require DNA as a template. Histones thereby play a central role in transcription regulation, DNA repair, DNA replication and chromosomal stability. DNA accessibility is regulated via a complex set of post-translational modifications of histones, also called histone code, and nucleosome remodeling. Required for checkpoint-mediated arrest of cell cycle progression in response to low doses of ionizing radiation and for efficient repair of DNA double strand breaks (DSBs) specifically when modified by C-terminal phosphorylation. In Cicer arietinum (Chickpea), this protein is Histone H2AX (HIS2A).